The sequence spans 351 residues: Autoinducer 2 import system permease protein LsrC (351 aa).

The next 9 helical transmembrane spans lie at 14–34 (LLAILTLFALLGIIDRNYFSL), 39–59 (MIFSSAQILILLAIGATLVML), 70–90 (ITGLCAVTVGMALNAGFGLAA), 93–113 (LFALLVGMVAGFFNGILVTWL), 115–135 (IPAIVATLGTLGLYRGLMLLL), 155–175 (ILFSISPIGWLTMLLILAMAW), 213–233 (MNGVMAALAGIVFASQIGFIP), 252–272 (GISLLGGTGTIIGAILGAFLL), and 284–304 (LPAWWNDFIAGLVLLGVLVFD).

The protein belongs to the binding-protein-dependent transport system permease family. AraH/RbsC subfamily. In terms of assembly, the complex is composed of two ATP-binding proteins (LsrA), two transmembrane proteins (LsrC and LsrD) and a solute-binding protein (LsrB).

Its subcellular location is the cell inner membrane. In terms of biological role, part of the ABC transporter complex LsrABCD involved in autoinducer 2 (AI-2) import. Probably responsible for the translocation of the substrate across the membrane. This is Autoinducer 2 import system permease protein LsrC (lsrC) from Yersinia pestis bv. Antiqua (strain Antiqua).